We begin with the raw amino-acid sequence, 217 residues long: MQLLMLEQISLASSVVATTVLVAPVLSTIINLLTNFGQRIFIAADSSKSTSMEFLSTIIGAGYPIYKTYLLLELPSKRSQLLPKAFQLRNEEHKSIEEERRRLMAYWCVYGCVTAAESILGRFLSWVPFYSTSKIVFWLWLLNPRTQGAAFIYASYISPFLSDHKAAINNFLEKLVQFTTRQPLVLNAWALVKSLIDKLPKGDVEAPGSDADTKKSK.

The next 4 helical transmembrane spans lie at 9–29 (ISLA…LSTI), 54–74 (FLST…LLEL), 103–125 (LMAY…RFLS), and 135–157 (IVFW…ASYI).

The protein belongs to the DP1 family.

The protein localises to the endoplasmic reticulum membrane. This is an uncharacterized protein from Schizosaccharomyces pombe (strain 972 / ATCC 24843) (Fission yeast).